Reading from the N-terminus, the 523-residue chain is 2-isopropylmalate synthase (523 aa).

A Pyruvate carboxyltransferase domain is found at 5 to 267 (VIIFDTTLRD…HTAINHQEIW (263 aa)). 4 residues coordinate Mn(2+): D14, H202, H204, and N238. A regulatory domain region spans residues 392 to 523 (RLDYFSVQSG…QHNENNKETV (132 aa)).

It belongs to the alpha-IPM synthase/homocitrate synthase family. LeuA type 1 subfamily. In terms of assembly, homodimer. Mn(2+) serves as cofactor.

It localises to the cytoplasm. It catalyses the reaction 3-methyl-2-oxobutanoate + acetyl-CoA + H2O = (2S)-2-isopropylmalate + CoA + H(+). Its pathway is amino-acid biosynthesis; L-leucine biosynthesis; L-leucine from 3-methyl-2-oxobutanoate: step 1/4. Catalyzes the condensation of the acetyl group of acetyl-CoA with 3-methyl-2-oxobutanoate (2-ketoisovalerate) to form 3-carboxy-3-hydroxy-4-methylpentanoate (2-isopropylmalate). In Escherichia coli (strain K12 / MC4100 / BW2952), this protein is 2-isopropylmalate synthase.